We begin with the raw amino-acid sequence, 460 residues long: GTPase Der (460 aa).

EngA-type G domains follow at residues K2–I164 and I199–T370. GTP-binding positions include G8–S15, D55–L59, N116–D119, G205–S212, D252–I256, and N316–D319. Residues Q371–G454 form the KH-like domain.

This sequence belongs to the TRAFAC class TrmE-Era-EngA-EngB-Septin-like GTPase superfamily. EngA (Der) GTPase family. In terms of assembly, associates with the 50S ribosomal subunit.

Its function is as follows. GTPase that plays an essential role in the late steps of ribosome biogenesis. The protein is GTPase Der of Campylobacter hominis (strain ATCC BAA-381 / DSM 21671 / CCUG 45161 / LMG 19568 / NCTC 13146 / CH001A).